Consider the following 210-residue polypeptide: LexA repressor (210 aa).

A DNA-binding region (H-T-H motif) is located at residues 30 to 50; sequence RVEIAREIGFKSPNAAEEHLK. Residues Ser-127 and Lys-164 each act as for autocatalytic cleavage activity in the active site.

This sequence belongs to the peptidase S24 family. Homodimer.

The catalysed reaction is Hydrolysis of Ala-|-Gly bond in repressor LexA.. In terms of biological role, represses a number of genes involved in the response to DNA damage (SOS response), including recA and lexA. In the presence of single-stranded DNA, RecA interacts with LexA causing an autocatalytic cleavage which disrupts the DNA-binding part of LexA, leading to derepression of the SOS regulon and eventually DNA repair. This Actinobacillus pleuropneumoniae serotype 5b (strain L20) protein is LexA repressor.